The following is a 284-amino-acid chain: Ermin (284 aa).

Positions 1–61 (MTDVPATFTQ…APTKGSQEER (61 aa)) are disordered. The residue at position 73 (Ser73) is a Phosphoserine. The tract at residues 108–251 (TFREGRQWEK…PTLGKKSDIS (144 aa)) is disordered. 2 stretches are compositionally biased toward basic and acidic residues: residues 126–140 (EIRR…QPLK) and 171–183 (LHSK…KVWD). Acidic residues predominate over residues 184–200 (EEIDDDDDDNCNDDEDE). The span at 201–220 (VRVIEFKKKHEEVSQFKEEG) shows a compositional bias: basic and acidic residues. A phosphoserine mark is found at Ser214, Ser226, Ser230, and Ser233. The span at 225–235 (DSPLSSASSQA) shows a compositional bias: low complexity. Thr237 carries the phosphothreonine modification. Positions 265–284 (KIRKGNTKQRIDEFESMMHL) are binds actin.

Binds actin.

It is found in the cytoplasm. Its subcellular location is the cytoskeleton. Its function is as follows. Plays a role in cytoskeletal rearrangements during the late wrapping and/or compaction phases of myelinogenesis as well as in maintenance and stability of myelin sheath in the adult. May play an important role in late-stage oligodendroglia maturation, myelin/Ranvier node formation during CNS development, and in the maintenance and plasticity of related structures in the mature CNS. This chain is Ermin (ERMN), found in Pongo abelii (Sumatran orangutan).